A 276-amino-acid polypeptide reads, in one-letter code: Putative pyruvate, phosphate dikinase regulatory protein (276 aa).

Position 154-161 (154-161 (GVSRTSKS)) interacts with ADP.

Belongs to the pyruvate, phosphate/water dikinase regulatory protein family. PDRP subfamily.

The enzyme catalyses N(tele)-phospho-L-histidyl/L-threonyl-[pyruvate, phosphate dikinase] + ADP = N(tele)-phospho-L-histidyl/O-phospho-L-threonyl-[pyruvate, phosphate dikinase] + AMP + H(+). The catalysed reaction is N(tele)-phospho-L-histidyl/O-phospho-L-threonyl-[pyruvate, phosphate dikinase] + phosphate + H(+) = N(tele)-phospho-L-histidyl/L-threonyl-[pyruvate, phosphate dikinase] + diphosphate. In terms of biological role, bifunctional serine/threonine kinase and phosphorylase involved in the regulation of the pyruvate, phosphate dikinase (PPDK) by catalyzing its phosphorylation/dephosphorylation. The sequence is that of Putative pyruvate, phosphate dikinase regulatory protein from Wolbachia pipientis wMel.